The sequence spans 154 residues: 6,7-dimethyl-8-ribityllumazine synthase (154 aa).

5-amino-6-(D-ribitylamino)uracil-binding positions include phenylalanine 22, 56-58 (AFE), and 80-82 (TVI). 85-86 (ST) contributes to the (2S)-2-hydroxy-3-oxobutyl phosphate binding site. The active-site Proton donor is the histidine 88. Residue phenylalanine 113 participates in 5-amino-6-(D-ribitylamino)uracil binding. (2S)-2-hydroxy-3-oxobutyl phosphate is bound at residue arginine 127.

The protein belongs to the DMRL synthase family.

It carries out the reaction (2S)-2-hydroxy-3-oxobutyl phosphate + 5-amino-6-(D-ribitylamino)uracil = 6,7-dimethyl-8-(1-D-ribityl)lumazine + phosphate + 2 H2O + H(+). The protein operates within cofactor biosynthesis; riboflavin biosynthesis; riboflavin from 2-hydroxy-3-oxobutyl phosphate and 5-amino-6-(D-ribitylamino)uracil: step 1/2. In terms of biological role, catalyzes the formation of 6,7-dimethyl-8-ribityllumazine by condensation of 5-amino-6-(D-ribitylamino)uracil with 3,4-dihydroxy-2-butanone 4-phosphate. This is the penultimate step in the biosynthesis of riboflavin. This is 6,7-dimethyl-8-ribityllumazine synthase from Lactococcus lactis subsp. cremoris (strain MG1363).